The primary structure comprises 437 residues: Asparagine--tRNA ligase (437 aa).

Belongs to the class-II aminoacyl-tRNA synthetase family. In terms of assembly, homodimer.

Its subcellular location is the cytoplasm. It catalyses the reaction tRNA(Asn) + L-asparagine + ATP = L-asparaginyl-tRNA(Asn) + AMP + diphosphate + H(+). The chain is Asparagine--tRNA ligase from Symbiobacterium thermophilum (strain DSM 24528 / JCM 14929 / IAM 14863 / T).